We begin with the raw amino-acid sequence, 212 residues long: Large ribosomal subunit protein uL3 (212 aa).

An N5-methylglutamine modification is found at Q153.

This sequence belongs to the universal ribosomal protein uL3 family. In terms of assembly, part of the 50S ribosomal subunit. Forms a cluster with proteins L14 and L19. Methylated by PrmB.

One of the primary rRNA binding proteins, it binds directly near the 3'-end of the 23S rRNA, where it nucleates assembly of the 50S subunit. The protein is Large ribosomal subunit protein uL3 of Colwellia psychrerythraea (strain 34H / ATCC BAA-681) (Vibrio psychroerythus).